Reading from the N-terminus, the 218-residue chain is Esterase FPY3 (218 aa).

Catalysis depends on charge relay system residues Ser95, Asp163, and His190.

Belongs to the LovG family.

It participates in secondary metabolite biosynthesis. Its function is as follows. Esterase; part of the gene cluster that mediates the biosynthesis of the gamma-pyrones fusapyrone (FPY) and deoxyfusapyrone (dFPY). FPY is an undecaketide and thus likely synthesized by the polyketide synthase FPY1 from acetyl-CoA functioning as starter unit and the addition of 10 malonyl-CoA extender units by successive Claisen-condensations. Next to this, FPY shares some rare features: C-glycosylated 4-deoxyglucose at C-3, a gem-dimethyl group at C-13, and an alpha-beta to beta-gamma double bond shift at C-20. During FPY biosynthesis mono-C-methyl groups are transferred to the tetra-, penta-, hexa- and heptaketide, while two C-methyl groups are transferred to the nonaketide, suggesting that the CMet domain is programmed to selectively catalyze two successive C-alpha-methylation reactions of the nonaketide, while other alpha-carbons are non- or mono-methylated only. While the origin of the 4'-deoxyglucose moiety remains opaque, its transfer to C-3 is most likely mediated by the C-glycosyltransferase FPY2. Next to this, the hydroxyl group present at C-33 and discriminating between FPY and dFPY, is likely to be installed by the cytochrome P450 monooxygenase FPY7. No putative function can be predicted for the remaining genes FPY3-FPY6. This chain is Esterase FPY3, found in Fusarium mangiferae (Mango malformation disease fungus).